The sequence spans 624 residues: Chaperone protein HtpG (624 aa).

Positions Met1–Arg336 are a; substrate-binding. A b region spans residues Glu337–Lys552. The tract at residues Leu553–Ser624 is c.

The protein belongs to the heat shock protein 90 family. Homodimer.

It localises to the cytoplasm. Functionally, molecular chaperone. Has ATPase activity. This is Chaperone protein HtpG from Salmonella choleraesuis (strain SC-B67).